Consider the following 360-residue polypeptide: Photosystem II protein D1 (360 aa).

The next 3 membrane-spanning stretches (helical) occupy residues tyrosine 29 to threonine 46, histidine 118 to phenylalanine 133, and tryptophan 142 to alanine 156. Histidine 118 is a binding site for chlorophyll a. Residue tryptophan 126 coordinates pheophytin a. Residues aspartate 170 and glutamate 189 each coordinate [CaMn4O5] cluster. The chain crosses the membrane as a helical span at residues phenylalanine 197 to leucine 218. Histidine 198 contributes to the chlorophyll a binding site. A quinone-binding positions include histidine 215 and serine 264–phenylalanine 265. Residue histidine 215 participates in Fe cation binding. Histidine 272 serves as a coordination point for Fe cation. Residues phenylalanine 274 to leucine 288 traverse the membrane as a helical segment. 4 residues coordinate [CaMn4O5] cluster: histidine 332, glutamate 333, aspartate 342, and alanine 344. Positions alanine 345–glycine 360 are excised as a propeptide.

This sequence belongs to the reaction center PufL/M/PsbA/D family. In terms of assembly, PSII is composed of 1 copy each of membrane proteins PsbA, PsbB, PsbC, PsbD, PsbE, PsbF, PsbH, PsbI, PsbJ, PsbK, PsbL, PsbM, PsbT, PsbX, PsbY, PsbZ, Psb30/Ycf12, at least 3 peripheral proteins of the oxygen-evolving complex and a large number of cofactors. It forms dimeric complexes. The D1/D2 heterodimer binds P680, chlorophylls that are the primary electron donor of PSII, and subsequent electron acceptors. It shares a non-heme iron and each subunit binds pheophytin, quinone, additional chlorophylls, carotenoids and lipids. D1 provides most of the ligands for the Mn4-Ca-O5 cluster of the oxygen-evolving complex (OEC). There is also a Cl(-1) ion associated with D1 and D2, which is required for oxygen evolution. The PSII complex binds additional chlorophylls, carotenoids and specific lipids. is required as a cofactor. Tyr-161 forms a radical intermediate that is referred to as redox-active TyrZ, YZ or Y-Z. Post-translationally, C-terminally processed by CTPA; processing is essential to allow assembly of the oxygen-evolving complex and thus photosynthetic growth.

It localises to the plastid. The protein localises to the chloroplast thylakoid membrane. The enzyme catalyses 2 a plastoquinone + 4 hnu + 2 H2O = 2 a plastoquinol + O2. In terms of biological role, photosystem II (PSII) is a light-driven water:plastoquinone oxidoreductase that uses light energy to abstract electrons from H(2)O, generating O(2) and a proton gradient subsequently used for ATP formation. It consists of a core antenna complex that captures photons, and an electron transfer chain that converts photonic excitation into a charge separation. The D1/D2 (PsbA/PsbD) reaction center heterodimer binds P680, the primary electron donor of PSII as well as several subsequent electron acceptors. The sequence is that of Photosystem II protein D1 from Rhodomonas salina (Cryptomonas salina).